A 142-amino-acid chain; its full sequence is Universal stress protein G (142 aa).

The protein belongs to the universal stress protein A family.

The polypeptide is Universal stress protein G (uspG) (Shigella flexneri).